The chain runs to 336 residues: UPF0324 membrane protein SP_0034 (336 aa).

Helical transmembrane passes span 65 to 84 (LLQYAVVLLGFGLNISQVFA), 91 to 113 (PVILSTISIALIIAYLFQRFFAL), 118 to 140 (ATLVGVGSSICGGSAIAATAPVI), 153 to 175 (VIFFFNVLAALIFPTLGTWLHLS), 211 to 233 (SATIVKLTRTLAIIPITLFLSYW), 249 to 271 (VFPLFILYFILASLLTTLLTSLG), 286 to 305 (FLIVMAMSAIGLKTNLVAMV), and 312 to 334 (ILLGAICWIAIILTTLGMQTLIG).

It belongs to the UPF0324 family.

Its subcellular location is the cell membrane. The chain is UPF0324 membrane protein SP_0034 from Streptococcus pneumoniae serotype 4 (strain ATCC BAA-334 / TIGR4).